A 399-amino-acid chain; its full sequence is Glucosamine kinase (399 aa).

Residues lysine 98, 149–151 (EYL), and aspartate 156 contribute to the ATP site. Aspartate 262 contacts D-glucosamine. 3 residues coordinate Mg(2+): glutamine 267, aspartate 279, and aspartate 281. A Substrate specificity determinant motif motif is present at residues 366–381 (QVLREIIYAARHLPRW). Position 370 (glutamate 370) interacts with D-glucosamine.

The protein belongs to the actinobacterial glucosamine kinase family. In terms of assembly, monomer. Mg(2+) is required as a cofactor.

It catalyses the reaction D-glucosamine + ATP = D-glucosamine 6-phosphate + ADP + H(+). Its function is as follows. Catalyzes the ATP-dependent phosphorylation of D-glucosamine (GlcN) to D-glucosamine 6-phosphate. May be involved in the phosphorylation of acquired extracellular GlcN derived from the hydrolysis of chitosan, i.e., in the incorporation of exogenous GlcN into the bacterial GlcNAc metabolism. Is unable to phosphorylate maltose. In Mycolicibacterium smegmatis (strain ATCC 700084 / mc(2)155) (Mycobacterium smegmatis), this protein is Glucosamine kinase.